A 118-amino-acid polypeptide reads, in one-letter code: Ribosome-binding factor A (118 aa).

This sequence belongs to the RbfA family. Monomer. Binds 30S ribosomal subunits, but not 50S ribosomal subunits or 70S ribosomes.

The protein localises to the cytoplasm. In terms of biological role, one of several proteins that assist in the late maturation steps of the functional core of the 30S ribosomal subunit. Associates with free 30S ribosomal subunits (but not with 30S subunits that are part of 70S ribosomes or polysomes). Required for efficient processing of 16S rRNA. May interact with the 5'-terminal helix region of 16S rRNA. The protein is Ribosome-binding factor A of Bacillus anthracis (strain A0248).